Reading from the N-terminus, the 209-residue chain is Large ribosomal subunit protein bL25 (209 aa).

Residues 188-209 (STSMEKEGEGSQEPTAAPSSEN) are disordered. A compositionally biased stretch (polar residues) spans 199–209 (QEPTAAPSSEN).

It belongs to the bacterial ribosomal protein bL25 family. CTC subfamily. As to quaternary structure, part of the 50S ribosomal subunit; part of the 5S rRNA/L5/L18/L25 subcomplex. Contacts the 5S rRNA. Binds to the 5S rRNA independently of L5 and L18.

Functionally, this is one of the proteins that binds to the 5S RNA in the ribosome where it forms part of the central protuberance. The sequence is that of Large ribosomal subunit protein bL25 from Ehrlichia canis (strain Jake).